A 564-amino-acid polypeptide reads, in one-letter code: Urocanate hydratase (564 aa).

NAD(+) contacts are provided by residues 58–59 (GG), Gln-136, 182–184 (GMG), Glu-202, Arg-207, 248–249 (NA), 269–273 (QTSAH), 279–280 (YL), and Tyr-328. Residue Cys-416 is part of the active site. Gly-498 lines the NAD(+) pocket.

The protein belongs to the urocanase family. It depends on NAD(+) as a cofactor.

It is found in the cytoplasm. It carries out the reaction 4-imidazolone-5-propanoate = trans-urocanate + H2O. It functions in the pathway amino-acid degradation; L-histidine degradation into L-glutamate; N-formimidoyl-L-glutamate from L-histidine: step 2/3. Catalyzes the conversion of urocanate to 4-imidazolone-5-propionate. The sequence is that of Urocanate hydratase from Aliivibrio salmonicida (strain LFI1238) (Vibrio salmonicida (strain LFI1238)).